We begin with the raw amino-acid sequence, 284 residues long: Tropomyosin alpha-3 chain (284 aa).

The residue at position 1 (Met1) is an N-acetylmethionine. The tract at residues 1–43 (MEAIKKKMQMLKLDKENALDRAEQAEAEQKQAEERSKQLEDEL) is disordered. Positions 1–284 (MEAIKKKMQM…DHALNDMTSI (284 aa)) form a coiled coil. The residue at position 2 (Glu2) is an N-acetylalanine. Over residues 12-40 (KLDKENALDRAEQAEAEQKQAEERSKQLE) the composition is skewed to basic and acidic residues. Thr53 is subject to Phosphothreonine. A phosphoserine mark is found at Ser61 and Ser87. At Thr108 the chain carries Phosphothreonine. Residues Ser206 and Ser215 each carry the phosphoserine modification. At Leu228 the chain carries N6-acetyllysine. Position 252 is a phosphothreonine (Thr252). The residue at position 261 (Tyr261) is a Phosphotyrosine. At Ser271 the chain carries Phosphoserine. At Thr282 the chain carries Phosphothreonine. Ser283 is subject to Phosphoserine.

The protein belongs to the tropomyosin family. As to quaternary structure, homodimer. Heterodimer of an alpha (TPM1, TPM3 or TPM4) and a beta (TPM2) chain. Interacts with TMOD1. Interacts with TNNT1.

It is found in the cytoplasm. Its subcellular location is the cytoskeleton. In terms of biological role, binds to actin filaments in muscle and non-muscle cells. Plays a central role, in association with the troponin complex, in the calcium dependent regulation of vertebrate striated muscle contraction. Smooth muscle contraction is regulated by interaction with caldesmon. In non-muscle cells is implicated in stabilizing cytoskeleton actin filaments. The sequence is that of Tropomyosin alpha-3 chain (TPM3) from Bos taurus (Bovine).